The following is a 149-amino-acid chain: 3-dehydroquinate dehydratase (149 aa).

Y22 acts as the Proton acceptor in catalysis. N73, H79, and D86 together coordinate substrate. H99 serves as the catalytic Proton donor. Residues 100–101 and R110 each bind substrate; that span reads LS.

Belongs to the type-II 3-dehydroquinase family. In terms of assembly, homododecamer.

It carries out the reaction 3-dehydroquinate = 3-dehydroshikimate + H2O. Its pathway is metabolic intermediate biosynthesis; chorismate biosynthesis; chorismate from D-erythrose 4-phosphate and phosphoenolpyruvate: step 3/7. In terms of biological role, catalyzes a trans-dehydration via an enolate intermediate. The sequence is that of 3-dehydroquinate dehydratase from Prochlorococcus marinus (strain MIT 9313).